Here is a 1162-residue protein sequence, read N- to C-terminus: DNA-directed RNA polymerase subunit beta 1 (1162 aa).

It belongs to the RNA polymerase beta chain family. The RNAP catalytic core consists of 2 alpha, 1 beta, 1 beta' and 1 omega subunit. When a sigma factor is associated with the core the holoenzyme is formed, which can initiate transcription.

It carries out the reaction RNA(n) + a ribonucleoside 5'-triphosphate = RNA(n+1) + diphosphate. DNA-dependent RNA polymerase catalyzes the transcription of DNA into RNA using the four ribonucleoside triphosphates as substrates. The polypeptide is DNA-directed RNA polymerase subunit beta 1 (Nocardia farcinica (strain IFM 10152)).